A 252-amino-acid polypeptide reads, in one-letter code: 2-succinyl-6-hydroxy-2,4-cyclohexadiene-1-carboxylate synthase (252 aa).

It belongs to the AB hydrolase superfamily. MenH family. Monomer.

The enzyme catalyses 5-enolpyruvoyl-6-hydroxy-2-succinyl-cyclohex-3-ene-1-carboxylate = (1R,6R)-6-hydroxy-2-succinyl-cyclohexa-2,4-diene-1-carboxylate + pyruvate. It participates in quinol/quinone metabolism; 1,4-dihydroxy-2-naphthoate biosynthesis; 1,4-dihydroxy-2-naphthoate from chorismate: step 3/7. The protein operates within quinol/quinone metabolism; menaquinone biosynthesis. Catalyzes a proton abstraction reaction that results in 2,5-elimination of pyruvate from 2-succinyl-5-enolpyruvyl-6-hydroxy-3-cyclohexene-1-carboxylate (SEPHCHC) and the formation of 2-succinyl-6-hydroxy-2,4-cyclohexadiene-1-carboxylate (SHCHC). The polypeptide is 2-succinyl-6-hydroxy-2,4-cyclohexadiene-1-carboxylate synthase (Salmonella agona (strain SL483)).